The sequence spans 236 residues: Adenosine 5'-phosphosulfate reductase (236 aa).

[4Fe-4S] cluster-binding residues include C122, C123, C205, and C208. C231 serves as the catalytic Nucleophile; cysteine thiosulfonate intermediate.

Belongs to the PAPS reductase family. CysH subfamily. It depends on [4Fe-4S] cluster as a cofactor.

The protein resides in the cytoplasm. It catalyses the reaction [thioredoxin]-disulfide + sulfite + AMP + 2 H(+) = adenosine 5'-phosphosulfate + [thioredoxin]-dithiol. Its pathway is sulfur metabolism; hydrogen sulfide biosynthesis; sulfite from sulfate. Its function is as follows. Catalyzes the formation of sulfite from adenosine 5'-phosphosulfate (APS) using thioredoxin as an electron donor. The polypeptide is Adenosine 5'-phosphosulfate reductase (Mycolicibacterium smegmatis (strain ATCC 700084 / mc(2)155) (Mycobacterium smegmatis)).